Reading from the N-terminus, the 257-residue chain is Transmembrane protein 101 (257 aa).

Transmembrane regions (helical) follow at residues 21-40, 52-72, 77-97, 110-130, 139-159, 182-202, 206-226, and 233-253; these read VLLTRCPFWGCFSQLMLYAE, VPYLYFDMGAAVLCASFMSFG, WFALGAALQLAISTYAAYIGG, YSRTVAIIGGFLVLASGAGEL, SLQSTGQVFLGIYLICVAYSL, LFFVLYGVLALAFLSGYYVTL, ILAVLLPPVMLLIDGNVAYWH, and FWNQMKLLGESVGIFGTAVIL.

Its subcellular location is the membrane. In terms of biological role, may activate NF-kappa-B signaling pathways. The sequence is that of Transmembrane protein 101 (TMEM101) from Pongo abelii (Sumatran orangutan).